The primary structure comprises 106 residues: Urease subunit beta (106 aa).

Belongs to the urease beta subunit family. As to quaternary structure, heterotrimer of UreA (gamma), UreB (beta) and UreC (alpha) subunits. Three heterotrimers associate to form the active enzyme.

It is found in the cytoplasm. The enzyme catalyses urea + 2 H2O + H(+) = hydrogencarbonate + 2 NH4(+). It functions in the pathway nitrogen metabolism; urea degradation; CO(2) and NH(3) from urea (urease route): step 1/1. This Acinetobacter baumannii (strain ATCC 17978 / DSM 105126 / CIP 53.77 / LMG 1025 / NCDC KC755 / 5377) protein is Urease subunit beta.